We begin with the raw amino-acid sequence, 532 residues long: Alkaline phosphatase (532 aa).

The disordered stretch occupies residues 1–20 (MASERDPLLPVHGEGPESPS). The helical; Signal-anchor for type II membrane protein transmembrane segment at 27–47 (WIKHGILLILVLSTVIFFYFF) threads the bilayer. Mg(2+) is bound at residue Asp-68. Asp-68 provides a ligand contact to Zn(2+). The Phosphoserine intermediate role is filled by Ser-115. The Mg(2+) site is built by Asp-166, Thr-168, and Glu-306. Zn(2+) contacts are provided by Asp-311, His-315, Asp-352, His-353, and His-456.

It belongs to the alkaline phosphatase family. Mg(2+) serves as cofactor. Zn(2+) is required as a cofactor.

Its subcellular location is the membrane. The catalysed reaction is a phosphate monoester + H2O = an alcohol + phosphate. This chain is Alkaline phosphatase, found in Schizosaccharomyces pombe (strain 972 / ATCC 24843) (Fission yeast).